Reading from the N-terminus, the 353-residue chain is Divinyl chlorophyll a/b light-harvesting protein PcbG (353 aa).

6 helical membrane-spanning segments follow: residues 28–48 (FISS…ANTL), 64–84 (GLVV…NGVF), 90–110 (LLVV…GGML), 204–224 (IMGG…FHIL), 244–264 (FVLS…ALWC), and 308–328 (LTNV…FHGL).

It belongs to the PsbB/PsbC family. IsiA/Pcb subfamily. As to quaternary structure, the antenna complex consists of divinyl chlorophylls (a and b) and divinyl chlorophyll a/b binding proteins and binds more divinyl chlorophyll b than does the antenna complex from high-light-adapted Prochlorococcus. Also forms complexes with PSI, consisting of a PSI trimer with surrounded by a PcbG ring (probably with 18 subunits). Is the only subunit found in this ring under iron-replete conditions. The cofactor is divinyl chlorophyll a. It depends on divinyl chlorophyll b as a cofactor.

Its subcellular location is the cellular thylakoid membrane. Its function is as follows. The antenna complex functions as a light receptor, it captures and delivers excitation energy to photosystems I. The Prochlorales pcb genes are not related to higher plant LHCs. The sequence is that of Divinyl chlorophyll a/b light-harvesting protein PcbG (pcbG) from Prochlorococcus marinus (strain SARG / CCMP1375 / SS120).